The chain runs to 224 residues: Toxin coregulated pilin (224 aa).

Positions 1–25 (MQLLKQLFKKKFVKEEHDKKTGQEG) are cleaved as a propeptide — atypical leader sequence. An N-methylmethionine modification is found at Met-26. The helical transmembrane segment at 26 to 46 (MTLLEVIIVLGIMGVVSAGVV) threads the bilayer. A disulfide bridge links Cys-145 with Cys-211.

The protein localises to the fimbrium. The protein resides in the membrane. Major component of the toxin co-regulated pilus (tcp) which is a type IV pilus essential for bacterial aggregation and subsequent colonization in the host small intestine. The polypeptide is Toxin coregulated pilin (tcpA) (Vibrio cholerae).